Consider the following 291-residue polypeptide: 2-C-methyl-D-erythritol 4-phosphate cytidylyltransferase (291 aa).

The disordered stretch occupies residues 1 to 23 (MTERDFDTPVETPTVQPAPAQGA).

The protein belongs to the IspD/TarI cytidylyltransferase family. IspD subfamily.

It catalyses the reaction 2-C-methyl-D-erythritol 4-phosphate + CTP + H(+) = 4-CDP-2-C-methyl-D-erythritol + diphosphate. Its pathway is isoprenoid biosynthesis; isopentenyl diphosphate biosynthesis via DXP pathway; isopentenyl diphosphate from 1-deoxy-D-xylulose 5-phosphate: step 2/6. In terms of biological role, catalyzes the formation of 4-diphosphocytidyl-2-C-methyl-D-erythritol from CTP and 2-C-methyl-D-erythritol 4-phosphate (MEP). The chain is 2-C-methyl-D-erythritol 4-phosphate cytidylyltransferase from Bifidobacterium longum (strain DJO10A).